A 401-amino-acid polypeptide reads, in one-letter code: Stearoyl-[acyl-carrier-protein] 9-desaturase 3, chloroplastic (401 aa).

The segment at Met1–Arg31 is disordered. Residues Met1–Ser35 constitute a chloroplast transit peptide. The Fe cation site is built by Glu140, Glu178, His181, Glu231, Glu264, and His267.

It belongs to the fatty acid desaturase type 2 family. As to quaternary structure, homodimer. Fe(2+) is required as a cofactor. As to expression, ubiquitously expressed with a preference in leaves, flowers and stems.

The protein localises to the plastid. The protein resides in the chloroplast. The enzyme catalyses octadecanoyl-[ACP] + 2 reduced [2Fe-2S]-[ferredoxin] + O2 + 2 H(+) = (9Z)-octadecenoyl-[ACP] + 2 oxidized [2Fe-2S]-[ferredoxin] + 2 H2O. The protein operates within lipid metabolism; fatty acid metabolism. In terms of biological role, converts stearoyl-ACP to oleoyl-ACP by introduction of a cis double bond between carbons 9 and 10 of the acyl chain. Also able to convert palmitoyl-ACP to palmitoleoyl-ACP at the C9 position. Exhibits delta-9 palmitoyl-[acyl-carrier-protein] desaturase (PAD) activity. Involved in omega-7 monounsaturated fatty acid biosynthesis, especially in the endosperm oil. The polypeptide is Stearoyl-[acyl-carrier-protein] 9-desaturase 3, chloroplastic (S-ACP-DES3) (Arabidopsis thaliana (Mouse-ear cress)).